The following is a 248-amino-acid chain: Probable transcriptional regulatory protein ECH_0704 (248 aa).

The segment at 1 to 21 (MAGHSQFANIKHRKGAQDAKR) is disordered.

The protein belongs to the TACO1 family.

Its subcellular location is the cytoplasm. The sequence is that of Probable transcriptional regulatory protein ECH_0704 from Ehrlichia chaffeensis (strain ATCC CRL-10679 / Arkansas).